The chain runs to 355 residues: Probable protein phosphatase 2C 21 (355 aa).

Residues Arg-23–Phe-329 form the PPM-type phosphatase domain. Asp-57, Gly-58, Asp-272, and Asp-320 together coordinate Mn(2+). Residues Phe-329–Ser-355 are disordered.

It belongs to the PP2C family. It depends on Mg(2+) as a cofactor. Requires Mn(2+) as cofactor.

It carries out the reaction O-phospho-L-seryl-[protein] + H2O = L-seryl-[protein] + phosphate. It catalyses the reaction O-phospho-L-threonyl-[protein] + H2O = L-threonyl-[protein] + phosphate. This is Probable protein phosphatase 2C 21 (PPC4-2) from Arabidopsis thaliana (Mouse-ear cress).